The primary structure comprises 84 residues: Small ribosomal subunit protein eS27-like (84 aa).

Basic and acidic residues predominate over residues 1–16; that stretch reads MPLARDLLHPSLDEEK. Residues 1 to 23 form a disordered region; that stretch reads MPLARDLLHPSLDEEKKKHKKKR. The segment at 38–60 adopts a C4-type zinc-finger fold; the sequence is PGCYKITTVFSHAQTVVLCVGCS.

It belongs to the eukaryotic ribosomal protein eS27 family. It depends on Zn(2+) as a cofactor.

This is Small ribosomal subunit protein eS27-like (RPS27L) from Bos taurus (Bovine).